Reading from the N-terminus, the 208-residue chain is Thymidylate kinase (208 aa).

12–19 is an ATP binding site; it reads GVDGAGKS.

This sequence belongs to the thymidylate kinase family.

The enzyme catalyses dTMP + ATP = dTDP + ADP. Functionally, phosphorylation of dTMP to form dTDP in both de novo and salvage pathways of dTTP synthesis. The polypeptide is Thymidylate kinase (Bordetella bronchiseptica (strain ATCC BAA-588 / NCTC 13252 / RB50) (Alcaligenes bronchisepticus)).